The following is a 307-amino-acid chain: Ornithine carbamoyltransferase (307 aa).

Residues 50-53 (STRT), Gln77, Arg101, and 128-131 (HPCQ) contribute to the carbamoyl phosphate site. Residues Asn160, Asp224, and 228-229 (SM) each bind L-ornithine. Carbamoyl phosphate contacts are provided by residues 264–265 (CL) and Arg292.

The protein belongs to the aspartate/ornithine carbamoyltransferase superfamily. OTCase family.

The protein resides in the cytoplasm. The enzyme catalyses carbamoyl phosphate + L-ornithine = L-citrulline + phosphate + H(+). It participates in amino-acid biosynthesis; L-arginine biosynthesis; L-arginine from L-ornithine and carbamoyl phosphate: step 1/3. Functionally, reversibly catalyzes the transfer of the carbamoyl group from carbamoyl phosphate (CP) to the N(epsilon) atom of ornithine (ORN) to produce L-citrulline. The sequence is that of Ornithine carbamoyltransferase from Clavibacter sepedonicus (Clavibacter michiganensis subsp. sepedonicus).